We begin with the raw amino-acid sequence, 248 residues long: Probable transcriptional regulatory protein trd_1132 (248 aa).

This sequence belongs to the TACO1 family.

It localises to the cytoplasm. The protein is Probable transcriptional regulatory protein trd_1132 of Thermomicrobium roseum (strain ATCC 27502 / DSM 5159 / P-2).